A 648-amino-acid polypeptide reads, in one-letter code: Putative potassium transport protein DDB_G0292412 (648 aa).

The helical transmembrane segment at 48 to 68 (LFLLVILVQLGSTVLLTLPIV) threads the bilayer. A glycan (N-linked (GlcNAc...) asparagine) is linked at Asn-81. Disordered stretches follow at residues 106 to 145 (HDFK…DDND) and 223 to 261 (QQQQ…DSQS). The segment covering 110-129 (DDDDENDNNNNEENDDNDDE) has biased composition (acidic residues). Residues 199–227 (IIQQQQQQQQQQQQQQQQQQQQQQQQQQQ) are a coiled coil. Residues Asn-239, Asn-243, Asn-247, Asn-248, Asn-254, and Asn-257 are each glycosylated (N-linked (GlcNAc...) asparagine). Transmembrane regions (helical) follow at residues 313 to 333 (LLVI…ISIG), 353 to 373 (GWWW…LALF), 385 to 405 (FLLI…PVFL), 443 to 463 (VQLF…MALL), 472 to 491 (NMNY…STRT), and 505 to 525 (SVLL…IISL). Asn-536 carries N-linked (GlcNAc...) asparagine glycosylation. A run of 3 helical transmembrane segments spans residues 550–570 (IFVP…LLES), 571–591 (GVIT…NVGL), and 592–612 (SISI…MLAG).

It belongs to the TrkH potassium transport family.

Its subcellular location is the membrane. In terms of biological role, may function as a potassium transporter. This chain is Putative potassium transport protein DDB_G0292412, found in Dictyostelium discoideum (Social amoeba).